The chain runs to 447 residues: tRNA modification GTPase MnmE (447 aa).

(6S)-5-formyl-5,6,7,8-tetrahydrofolate-binding residues include Arg24, Glu81, and Lys120. Residues 216–371 enclose the TrmE-type G domain; sequence GLNVAIAGKP…LRKELSNISG (156 aa). Asn226 provides a ligand contact to K(+). GTP-binding positions include 226–231, 245–251, and 270–273; these read NAGKSS, TDIAGTT, and DTAG. Ser230 provides a ligand contact to Mg(2+). 3 residues coordinate K(+): Thr245, Ile247, and Thr250. Mg(2+) is bound at residue Thr251. Lys447 serves as a coordination point for (6S)-5-formyl-5,6,7,8-tetrahydrofolate.

The protein belongs to the TRAFAC class TrmE-Era-EngA-EngB-Septin-like GTPase superfamily. TrmE GTPase family. As to quaternary structure, homodimer. Heterotetramer of two MnmE and two MnmG subunits. It depends on K(+) as a cofactor.

It is found in the cytoplasm. Its function is as follows. Exhibits a very high intrinsic GTPase hydrolysis rate. Involved in the addition of a carboxymethylaminomethyl (cmnm) group at the wobble position (U34) of certain tRNAs, forming tRNA-cmnm(5)s(2)U34. The polypeptide is tRNA modification GTPase MnmE (Vesicomyosocius okutanii subsp. Calyptogena okutanii (strain HA)).